The primary structure comprises 262 residues: Acyl-[acyl-carrier-protein]--UDP-N-acetylglucosamine O-acyltransferase (262 aa).

Belongs to the transferase hexapeptide repeat family. LpxA subfamily. As to quaternary structure, homotrimer.

It is found in the cytoplasm. It carries out the reaction a (3R)-hydroxyacyl-[ACP] + UDP-N-acetyl-alpha-D-glucosamine = a UDP-3-O-[(3R)-3-hydroxyacyl]-N-acetyl-alpha-D-glucosamine + holo-[ACP]. It participates in glycolipid biosynthesis; lipid IV(A) biosynthesis; lipid IV(A) from (3R)-3-hydroxytetradecanoyl-[acyl-carrier-protein] and UDP-N-acetyl-alpha-D-glucosamine: step 1/6. In terms of biological role, involved in the biosynthesis of lipid A, a phosphorylated glycolipid that anchors the lipopolysaccharide to the outer membrane of the cell. The chain is Acyl-[acyl-carrier-protein]--UDP-N-acetylglucosamine O-acyltransferase from Erwinia tasmaniensis (strain DSM 17950 / CFBP 7177 / CIP 109463 / NCPPB 4357 / Et1/99).